Consider the following 452-residue polypeptide: tRNA modification GTPase MnmE (452 aa).

(6S)-5-formyl-5,6,7,8-tetrahydrofolate is bound by residues arginine 28, glutamate 85, and lysine 124. In terms of domain architecture, TrmE-type G spans 220-378; the sequence is GMNVVLVGRP…LRTELLRAAG (159 aa). Asparagine 230 contacts K(+). GTP-binding positions include 230-235, 249-255, 274-277, and 359-361; these read NVGKSS, TDVAGTT, DTAG, and SAR. Position 234 (serine 234) interacts with Mg(2+). The K(+) site is built by threonine 249, valine 251, and threonine 254. Threonine 255 is a Mg(2+) binding site. Lysine 452 is a (6S)-5-formyl-5,6,7,8-tetrahydrofolate binding site.

Belongs to the TRAFAC class TrmE-Era-EngA-EngB-Septin-like GTPase superfamily. TrmE GTPase family. In terms of assembly, homodimer. Heterotetramer of two MnmE and two MnmG subunits. Requires K(+) as cofactor.

Its subcellular location is the cytoplasm. In terms of biological role, exhibits a very high intrinsic GTPase hydrolysis rate. Involved in the addition of a carboxymethylaminomethyl (cmnm) group at the wobble position (U34) of certain tRNAs, forming tRNA-cmnm(5)s(2)U34. The chain is tRNA modification GTPase MnmE from Azoarcus sp. (strain BH72).